A 272-amino-acid chain; its full sequence is Aurora kinase (272 aa).

The Protein kinase domain occupies 10–263 (FEIGRLLGRG…LTEALNHPFI (254 aa)). Residues 16–24 (LGRGKFGQV) and Lys-39 contribute to the ATP site. The active-site Proton acceptor is the Asp-134.

The protein belongs to the protein kinase superfamily. Ser/Thr protein kinase family. Aurora subfamily.

Its subcellular location is the nucleus. The protein resides in the cytoplasm. It localises to the cytoskeleton. It is found in the spindle. The protein localises to the chromosome. Its subcellular location is the centromere. The protein resides in the kinetochore. The enzyme catalyses L-seryl-[protein] + ATP = O-phospho-L-seryl-[protein] + ADP + H(+). It catalyses the reaction L-threonyl-[protein] + ATP = O-phospho-L-threonyl-[protein] + ADP + H(+). In terms of biological role, component of the chromosomal passenger complex (CPC), a complex that acts as a key regulator of chromosome segregation and cytokinesis. Has a role in error-correction of aberrent kinetochore-microtubule attachments to ensure that sister kinetochores become bioriented and connect to opposite poles by promoting spindle assembly checkpoint signaling. This Encephalitozoon cuniculi (strain GB-M1) (Microsporidian parasite) protein is Aurora kinase (IPL1).